Consider the following 260-residue polypeptide: Acyl-[acyl-carrier-protein]--UDP-N-acetylglucosamine O-acyltransferase (260 aa).

It belongs to the transferase hexapeptide repeat family. LpxA subfamily. Homotrimer.

It localises to the cytoplasm. It carries out the reaction a (3R)-hydroxyacyl-[ACP] + UDP-N-acetyl-alpha-D-glucosamine = a UDP-3-O-[(3R)-3-hydroxyacyl]-N-acetyl-alpha-D-glucosamine + holo-[ACP]. The protein operates within glycolipid biosynthesis; lipid IV(A) biosynthesis; lipid IV(A) from (3R)-3-hydroxytetradecanoyl-[acyl-carrier-protein] and UDP-N-acetyl-alpha-D-glucosamine: step 1/6. Its function is as follows. Involved in the biosynthesis of lipid A, a phosphorylated glycolipid that anchors the lipopolysaccharide to the outer membrane of the cell. This Sulfurovum sp. (strain NBC37-1) protein is Acyl-[acyl-carrier-protein]--UDP-N-acetylglucosamine O-acyltransferase.